The following is a 160-amino-acid chain: Anaerobic nitrite reductase AHB1 (160 aa).

Positions 8 to 157 (VFTEEQEALV…LVAAIKAEMN (150 aa)) constitute a Globin domain. A Homodimerization motif is present at residues 41–45 (EIAPT). Residues S51, K65, H69, R99, S103, and H104 each contribute to the heme b site. The short motif at 111–123 (DEHFEVAKYALLE) is the Homodimerization element.

This sequence belongs to the plant globin family. Homodimer. It depends on heme b as a cofactor. Expressed in roots and rosette leaves.

It is found in the cytoplasm. The protein resides in the nucleus. It carries out the reaction Fe(III)-heme b-[protein] + nitric oxide + H2O = Fe(II)-heme b-[protein] + nitrite + 2 H(+). Phytoglobin that reduces nitrite to nitric oxide (NO) under anoxic conditions (e.g. during flooding or in waterlogged soil). May not function as an oxygen storage or transport protein. Has an unusually high affinity for O(2) through an hexacoordinate heme iron because of a very low dissociation constant. The polypeptide is Anaerobic nitrite reductase AHB1 (Arabidopsis thaliana (Mouse-ear cress)).